The following is a 373-amino-acid chain: Indole glucosinolate O-methyltransferase 1 (373 aa).

Positions 217, 240, 260, 261, and 274 each coordinate S-adenosyl-L-homocysteine. The active-site Proton acceptor is His278.

It belongs to the class I-like SAM-binding methyltransferase superfamily. Cation-independent O-methyltransferase family. Interacts with B'GAMMA.

It functions in the pathway secondary metabolite biosynthesis. Involved in indole glucosinolate biosynthesis. Catalyzes methoxylation reactions of the glucosinolate indole ring. Converts the hydroxy intermediates 4-hydroxy-indol-3-yl-methylglucosinolate (4OH-I3M) and 1-hydroxy-indol-3-yl-methylglucosinolate (1OH-I3M) to 4-methoxy-indol-3-yl-methylglucosinolate (4MO-I3M) and 1-methoxy-indol-3-yl-methylglucosinolate (1MO-I3M), respectively. This is Indole glucosinolate O-methyltransferase 1 from Arabidopsis thaliana (Mouse-ear cress).